The sequence spans 191 residues: Bcl-2-like protein 10 (191 aa).

The BH1 signature appears at Leu79–Gly98. Lys112 participates in a covalent cross-link: Glycyl lysine isopeptide (Lys-Gly) (interchain with G-Cter in ubiquitin). The short motif at Arg144–Cys155 is the BH2 element. The chain crosses the membrane as a helical span at residues Phe166 to Ala183.

This sequence belongs to the Bcl-2 family. In terms of assembly, interacts with BAX. Interacts with BCL2 and BCL2L1/BCLX. Interacts with APAF1. Interacts with ITPR1, ITPR2 and ITPR3; the interaction with ITPR1 is increased in the presence of AHCLY1. Interacts with AHCYL1. Interacts with HIP1R (via ENTH and I/LWEQ domains). Interacts with CASP9. Interacts with BCL2L11/BIM. Interacts with BIK. Interacts with UBQLN4. Interacts with NME2/NM23-H2. Interacts with PMAIP1/NOXA. Interacts with TPX2. Interacts with UBQLN1; in the cytoplasm. Interacts (via BH1 domain) with BECN1. The cofactor is Ca(2+). Monoubiquitinated by UBQLN1; results in stabilization of BCL2L10 protein abundance and in relocalization from mitochondria to cytoplasm. Expressed in multiple embryonic tissues. Restricted to the ovary and testis in adult mice.

It is found in the mitochondrion. It localises to the nucleus membrane. Its subcellular location is the endoplasmic reticulum. The protein localises to the cytoplasm. The protein resides in the cytoskeleton. It is found in the spindle. Promotes cell survival by suppressing apoptosis induced by BAX but not BAK. Increases binding of AHCYL1/IRBIT to ITPR1. Reduces ITPR1-mediated calcium release from the endoplasmic reticulum cooperatively with AHCYL1/IRBIT under normal cellular conditions. Under apoptotic stress conditions, dissociates from ITPR1 and is displaced from mitochondria-associated endoplasmic reticulum membranes, leading to increased Ca(2+) transfer to mitochondria which promotes apoptosis. Required for the correct formation of the microtubule organizing center during oocyte cell division, potentially via regulation of protein abundance and localization of other microtubule organizing center components such as AURKA and TPX2. The protein is Bcl-2-like protein 10 of Mus musculus (Mouse).